The following is a 521-amino-acid chain: Non-specific phospholipase C5 (521 aa).

Basic and acidic residues predominate over residues 478–487 (SKKARERGGD). The tract at residues 478–521 (SKKARERGGDENDIVFCVDDDDDHNVVKPPPSQSEPSHATPWSN) is disordered. A compositionally biased stretch (polar residues) spans 511–521 (SEPSHATPWSN).

The protein belongs to the bacterial phospholipase C family. Specifically expressed in flowers.

The protein localises to the cytoplasm. It localises to the cytosol. It carries out the reaction a 1,2-diacyl-sn-glycero-3-phosphocholine + H2O = phosphocholine + a 1,2-diacyl-sn-glycerol + H(+). Functionally, non-specific phospholipase C (PLC) which assumes minor PLC activity during inorganic phosphate starvation. Can hydrolyze both phosphatidylcholine (PC) and phosphatidylethanolamine (PE). Required for normal accumulation of digalactosyldiacylglycerol (DGDG) during phosphate limitation and may contribute to the conversion of phospholipids to diacylglycerol, the substrate for galactolipid synthesis. The polypeptide is Non-specific phospholipase C5 (NPC5) (Arabidopsis thaliana (Mouse-ear cress)).